A 348-amino-acid polypeptide reads, in one-letter code: Phosphoribosylformylglycinamidine cyclo-ligase (348 aa).

This sequence belongs to the AIR synthase family.

The protein localises to the cytoplasm. The enzyme catalyses 2-formamido-N(1)-(5-O-phospho-beta-D-ribosyl)acetamidine + ATP = 5-amino-1-(5-phospho-beta-D-ribosyl)imidazole + ADP + phosphate + H(+). It functions in the pathway purine metabolism; IMP biosynthesis via de novo pathway; 5-amino-1-(5-phospho-D-ribosyl)imidazole from N(2)-formyl-N(1)-(5-phospho-D-ribosyl)glycinamide: step 2/2. The polypeptide is Phosphoribosylformylglycinamidine cyclo-ligase (Geobacter sp. (strain M21)).